The chain runs to 209 residues: Ion-translocating oxidoreductase complex subunit G (209 aa).

Residues 9–29 form a helical membrane-spanning segment; that stretch reads ATTLALFAASTTAVTAVVNML. T175 bears the FMN phosphoryl threonine mark.

The protein belongs to the RnfG family. The complex is composed of six subunits: RnfA, RnfB, RnfC, RnfD, RnfE and RnfG. The cofactor is FMN.

The protein localises to the cell inner membrane. Functionally, part of a membrane-bound complex that couples electron transfer with translocation of ions across the membrane. In Pectobacterium atrosepticum (strain SCRI 1043 / ATCC BAA-672) (Erwinia carotovora subsp. atroseptica), this protein is Ion-translocating oxidoreductase complex subunit G.